The sequence spans 874 residues: Ectonucleotide pyrophosphatase/phosphodiesterase family member 3 (874 aa).

Over 1–11 (MQSTLNLSTEE) the chain is Cytoplasmic. Residues 12 to 30 (PVKRNTVKKYKIICIVLLI) form a helical; Signal-anchor for type II membrane protein membrane-spanning segment. The Extracellular segment spans residues 31 to 874 (LLVAVSLALG…TYLPVFETVI (844 aa)). SMB domains follow at residues 50–93 (EQGS…VQST) and 94–138 (QIWT…GETS). 10 disulfides stabilise this stretch: C54–C71, C58–C89, C69–C82, C75–C81, C98–C115, C103–C133, C113–C126, C119–C125, C144–C190, and C152–C364. The Cell attachment site signature appears at 78 to 80 (RGD). Residues 160–544 (PVILFSMDGF…HGSLNHLLKV (385 aa)) are phosphodiesterase. A Zn(2+)-binding site is contributed by D167. Residue K204 coordinates ATP. T205 is a Zn(2+) binding site. Residue T205 is the Nucleophile of the active site. ATP is bound at residue N226. N236 carries N-linked (GlcNAc...) asparagine glycosylation. D275 contributes to the ATP binding site. N279 carries an N-linked (GlcNAc...) asparagine glycan. Y289 contacts ATP. N290 carries N-linked (GlcNAc...) asparagine glycosylation. Zn(2+) contacts are provided by D325, H329, D372, and H373. Intrachain disulfides connect C380–C477, C428–C817, C561–C622, C574–C678, C576–C663, and C786–C796. A glycan (N-linked (GlcNAc...) asparagine) is linked at N425. Residue H482 coordinates Zn(2+). A glycan (N-linked (GlcNAc...) asparagine) is linked at N532. A nuclease region spans residues 581–874 (TNSDLERVNQ…TYLPVFETVI (294 aa)). N-linked (GlcNAc...) asparagine glycans are attached at residues N677, N686, and N698. Residues D751, D755, H757, and D759 each coordinate Ca(2+). N-linked (GlcNAc...) asparagine glycosylation is found at N770, N788, and N820.

The protein belongs to the nucleotide pyrophosphatase/phosphodiesterase family. As to quaternary structure, monomer and homodimer. It depends on Zn(2+) as a cofactor. Post-translationally, N-glycosylated. N-glycosylation is necessary for normal transport to the cell membrane, but is not the apical targeting signal.

Its subcellular location is the cell membrane. It is found in the apical cell membrane. The protein resides in the secreted. The enzyme catalyses a ribonucleoside 5'-triphosphate + H2O = a ribonucleoside 5'-phosphate + diphosphate + H(+). It carries out the reaction ATP + H2O = AMP + diphosphate + H(+). The catalysed reaction is CTP + H2O = CMP + diphosphate + H(+). It catalyses the reaction GTP + H2O = GMP + diphosphate + H(+). The enzyme catalyses UTP + H2O = UMP + diphosphate + H(+). It carries out the reaction UDP-N-acetyl-alpha-D-glucosamine + H2O = N-acetyl-alpha-D-glucosamine 1-phosphate + UMP + 2 H(+). The catalysed reaction is P(1),P(3)-bis(5'-adenosyl) triphosphate + H2O = AMP + ADP + 2 H(+). It catalyses the reaction P(1),P(4)-bis(5'-adenosyl) tetraphosphate + H2O = AMP + ATP + 2 H(+). The enzyme catalyses P(1),P(5)-bis(5'-adenosyl) pentaphosphate + H2O = adenosine 5'-tetraphosphate + AMP + 2 H(+). It carries out the reaction P(1),P(4)-bis(5'-guanosyl) tetraphosphate + H2O = GMP + GTP + 2 H(+). The catalysed reaction is Hydrolytically removes 5'-nucleotides successively from the 3'-hydroxy termini of 3'-hydroxy-terminated oligonucleotides.. Hydrolase that metabolizes extracellular nucleotides, including ATP, GTP, UTP and CTP. Limits mast cells and basophils response during inflammation and during the chronic phases of allergic responses by eliminating extracellular ATP, a signaling molecule activating these cells in an autocrine manner. Metabolizes extracellular ATP in the lumen of the small intestine, and thereby prevents ATP-induced apoptosis of intestinal plasmacytoid dendritic cells. Has a broad specificity and can also hydrolyze UDP-GlcNAc into UMP and GlcNAc-1-phosphate and potentially several other intracellular nucleotide sugars, including UDP-GalNAc, CMP-NeuAc, GDP-Fuc, and UDP-GlcA. Thereby, could modulate glycan biosynthesis and protein glycosylation. Can hydrolyze extracellular dinucleoside polyphosphates, including the vasoactive adenosine polyphosphates as well. In addition, displays an alkaline phosphodiesterase activity in vitro. The protein is Ectonucleotide pyrophosphatase/phosphodiesterase family member 3 (ENPP3) of Bos taurus (Bovine).